A 323-amino-acid chain; its full sequence is tRNA dimethylallyltransferase (323 aa).

12–19 (GPTAAGKT) is an ATP binding site. Substrate is bound at residue 14–19 (TAAGKT). 2 interaction with substrate tRNA regions span residues 37–40 (DSAL) and 161–165 (QRLIR).

This sequence belongs to the IPP transferase family. Monomer. It depends on Mg(2+) as a cofactor.

The catalysed reaction is adenosine(37) in tRNA + dimethylallyl diphosphate = N(6)-dimethylallyladenosine(37) in tRNA + diphosphate. Catalyzes the transfer of a dimethylallyl group onto the adenine at position 37 in tRNAs that read codons beginning with uridine, leading to the formation of N6-(dimethylallyl)adenosine (i(6)A). This chain is tRNA dimethylallyltransferase, found in Pseudomonas syringae pv. tomato (strain ATCC BAA-871 / DC3000).